The sequence spans 167 residues: Cytochrome c-type biogenesis protein CcmE (167 aa).

Over 1–7 (MTRKQRR) the chain is Cytoplasmic. The helical; Signal-anchor for type II membrane protein transmembrane segment at 8 to 28 (LLMIGGAGVVLIVAVGLVLNA) threads the bilayer. Topologically, residues 29–167 (LRDSIVFFST…TSANAAEGGK (139 aa)) are periplasmic. 2 residues coordinate heme: His-122 and Tyr-126. Basic and acidic residues predominate over residues 137-150 (KDGHWKDDYGKKSP). The disordered stretch occupies residues 137–167 (KDGHWKDDYGKKSPGETTAGQTSANAAEGGK). The span at 151–161 (GETTAGQTSAN) shows a compositional bias: polar residues.

Belongs to the CcmE/CycJ family.

Its subcellular location is the cell inner membrane. Its function is as follows. Heme chaperone required for the biogenesis of c-type cytochromes. Transiently binds heme delivered by CcmC and transfers the heme to apo-cytochromes in a process facilitated by CcmF and CcmH. This Rhodopseudomonas palustris (strain ATCC BAA-98 / CGA009) protein is Cytochrome c-type biogenesis protein CcmE.